Here is a 211-residue protein sequence, read N- to C-terminus: Small ribosomal subunit protein uS3 (211 aa).

Residues 38–106 (LRSFVKKTFH…EVELHIVEVK (69 aa)) enclose the KH type-2 domain.

Belongs to the universal ribosomal protein uS3 family. Part of the 30S ribosomal subunit. Forms a tight complex with proteins S10 and S14.

Functionally, binds the lower part of the 30S subunit head. Binds mRNA in the 70S ribosome, positioning it for translation. The sequence is that of Small ribosomal subunit protein uS3 from Anaplasma phagocytophilum (strain HZ).